A 257-amino-acid chain; its full sequence is 5-keto-4-deoxy-D-glucarate aldolase (257 aa).

His-51 serves as the catalytic Proton acceptor. Gln-152 is a substrate binding site. Residue Glu-154 coordinates Mg(2+). Residues Ser-179 and Asp-180 each contribute to the substrate site. Residue Asp-180 participates in Mg(2+) binding.

Belongs to the HpcH/HpaI aldolase family. KDGluc aldolase subfamily. As to quaternary structure, homohexamer; trimer of dimers. Requires Mg(2+) as cofactor.

The catalysed reaction is 5-dehydro-4-deoxy-D-glucarate = 2-hydroxy-3-oxopropanoate + pyruvate. The enzyme catalyses 2-dehydro-3-deoxy-D-glucarate = 2-hydroxy-3-oxopropanoate + pyruvate. Its pathway is carbohydrate acid metabolism; galactarate degradation; D-glycerate from galactarate: step 2/3. In terms of biological role, catalyzes the reversible retro-aldol cleavage of both 5-keto-4-deoxy-D-glucarate and 2-keto-3-deoxy-D-glucarate to pyruvate and tartronic semialdehyde. This Shigella boydii serotype 18 (strain CDC 3083-94 / BS512) protein is 5-keto-4-deoxy-D-glucarate aldolase.